A 160-amino-acid chain; its full sequence is Cyanate hydratase (160 aa).

Active-site residues include arginine 100, glutamate 103, and serine 126.

Belongs to the cyanase family.

It carries out the reaction cyanate + hydrogencarbonate + 3 H(+) = NH4(+) + 2 CO2. Catalyzes the reaction of cyanate with bicarbonate to produce ammonia and carbon dioxide. The sequence is that of Cyanate hydratase from Aspergillus niger (strain ATCC MYA-4892 / CBS 513.88 / FGSC A1513).